The following is a 303-amino-acid chain: tRNA pseudouridine synthase B (303 aa).

Asp47 functions as the Nucleophile in the catalytic mechanism.

The protein belongs to the pseudouridine synthase TruB family. Type 1 subfamily.

The catalysed reaction is uridine(55) in tRNA = pseudouridine(55) in tRNA. Its function is as follows. Responsible for synthesis of pseudouridine from uracil-55 in the psi GC loop of transfer RNAs. This chain is tRNA pseudouridine synthase B, found in Roseobacter denitrificans (strain ATCC 33942 / OCh 114) (Erythrobacter sp. (strain OCh 114)).